Reading from the N-terminus, the 498-residue chain is ATP synthase subunit beta, chloroplastic (498 aa).

Position 6 is a phosphothreonine (Thr6). At Ser13 the chain carries Phosphoserine. 172-179 (GGAGVGKT) contributes to the ATP binding site.

The protein belongs to the ATPase alpha/beta chains family. As to quaternary structure, F-type ATPases have 2 components, CF(1) - the catalytic core - and CF(0) - the membrane proton channel. CF(1) has five subunits: alpha(3), beta(3), gamma(1), delta(1), epsilon(1). CF(0) has four main subunits: a(1), b(1), b'(1) and c(9-12).

It is found in the plastid. Its subcellular location is the chloroplast thylakoid membrane. It catalyses the reaction ATP + H2O + 4 H(+)(in) = ADP + phosphate + 5 H(+)(out). Its function is as follows. Produces ATP from ADP in the presence of a proton gradient across the membrane. The catalytic sites are hosted primarily by the beta subunits. The chain is ATP synthase subunit beta, chloroplastic from Olimarabidopsis pumila (Dwarf rocket).